An 88-amino-acid polypeptide reads, in one-letter code: Sec-independent protein translocase protein TatA (88 aa).

A helical transmembrane segment spans residues 3–23 (IFGVGLPEVTVILILALLIFG). The interval 56–88 (MNEQDKDESPISIESNQTNEINQEKIDSENSKK) is disordered. Polar residues predominate over residues 67-76 (SIESNQTNEI). Positions 77-88 (NQEKIDSENSKK) are enriched in basic and acidic residues.

This sequence belongs to the TatA/E family. As to quaternary structure, forms a complex with TatC.

It is found in the cell inner membrane. Its function is as follows. Part of the twin-arginine translocation (Tat) system that transports large folded proteins containing a characteristic twin-arginine motif in their signal peptide across membranes. TatA could form the protein-conducting channel of the Tat system. In Prochlorococcus marinus (strain AS9601), this protein is Sec-independent protein translocase protein TatA.